The chain runs to 428 residues: Adenylosuccinate synthetase (428 aa).

Residues glycine 12–lysine 18 and glycine 40–threonine 42 each bind GTP. Aspartate 13 (proton acceptor) is an active-site residue. Residues aspartate 13 and glycine 40 each coordinate Mg(2+). IMP contacts are provided by residues aspartate 13–lysine 16, asparagine 38–histidine 41, threonine 130, arginine 144, glutamine 224, threonine 239, and arginine 303. Histidine 41 functions as the Proton donor in the catalytic mechanism. Valine 299–arginine 305 contributes to the substrate binding site. GTP contacts are provided by residues arginine 305, lysine 331–aspartate 333, and glycine 413–glycine 415.

The protein belongs to the adenylosuccinate synthetase family. As to quaternary structure, homodimer. Mg(2+) is required as a cofactor.

The protein resides in the cytoplasm. It carries out the reaction IMP + L-aspartate + GTP = N(6)-(1,2-dicarboxyethyl)-AMP + GDP + phosphate + 2 H(+). It functions in the pathway purine metabolism; AMP biosynthesis via de novo pathway; AMP from IMP: step 1/2. Plays an important role in the de novo pathway of purine nucleotide biosynthesis. Catalyzes the first committed step in the biosynthesis of AMP from IMP. In Clostridium perfringens (strain 13 / Type A), this protein is Adenylosuccinate synthetase.